Consider the following 214-residue polypeptide: Probable transaldolase (214 aa).

Lysine 83 acts as the Schiff-base intermediate with substrate in catalysis.

Belongs to the transaldolase family. Type 3B subfamily.

It is found in the cytoplasm. The enzyme catalyses D-sedoheptulose 7-phosphate + D-glyceraldehyde 3-phosphate = D-erythrose 4-phosphate + beta-D-fructose 6-phosphate. The protein operates within carbohydrate degradation; pentose phosphate pathway; D-glyceraldehyde 3-phosphate and beta-D-fructose 6-phosphate from D-ribose 5-phosphate and D-xylulose 5-phosphate (non-oxidative stage): step 2/3. Its function is as follows. Transaldolase is important for the balance of metabolites in the pentose-phosphate pathway. The protein is Probable transaldolase of Geobacter sp. (strain M21).